A 553-amino-acid polypeptide reads, in one-letter code: Membrane protein insertase YidC (553 aa).

5 consecutive transmembrane segments (helical) span residues 7–24 (VLWV…DNWQ), 365–385 (WGWA…PLSA), 435–455 (LPVV…LASV), 474–494 (PYFI…SLNP), and 509–529 (PIAF…YYVV).

Belongs to the OXA1/ALB3/YidC family. Type 1 subfamily. As to quaternary structure, interacts with the Sec translocase complex via SecD. Specifically interacts with transmembrane segments of nascent integral membrane proteins during membrane integration.

It localises to the cell inner membrane. In terms of biological role, required for the insertion and/or proper folding and/or complex formation of integral membrane proteins into the membrane. Involved in integration of membrane proteins that insert both dependently and independently of the Sec translocase complex, as well as at least some lipoproteins. Aids folding of multispanning membrane proteins. The protein is Membrane protein insertase YidC of Burkholderia multivorans (strain ATCC 17616 / 249).